Here is a 158-residue protein sequence, read N- to C-terminus: Transcription elongation factor GreB (158 aa).

Belongs to the GreA/GreB family. GreB subfamily.

Necessary for efficient RNA polymerase transcription elongation past template-encoded arresting sites. The arresting sites in DNA have the property of trapping a certain fraction of elongating RNA polymerases that pass through, resulting in locked ternary complexes. Cleavage of the nascent transcript by cleavage factors such as GreA or GreB allows the resumption of elongation from the new 3'terminus. GreB releases sequences of up to 9 nucleotides in length. In Escherichia coli O157:H7, this protein is Transcription elongation factor GreB.